Reading from the N-terminus, the 409-residue chain is Translation initiation factor 2 subunit gamma (409 aa).

Residues 6–203 form the tr-type G domain; that stretch reads QPEVNIGLVG…AVQSEIPTPE (198 aa). Residues 15–22 are G1; the sequence is GHVDHGKT. 4 residues coordinate Mg(2+): D18, T22, G43, and S45. 18–23 provides a ligand contact to GTP; that stretch reads DHGKTT. Residues 43–47 form a G2 region; sequence GISIR. Positions 90–93 are G3; sequence DAPG. GTP contacts are provided by residues 146–149 and 181–183; these read NKVD and SAG. Positions 146-149 are G4; it reads NKVD. The tract at residues 181–183 is G5; that stretch reads SAG.

The protein belongs to the TRAFAC class translation factor GTPase superfamily. Classic translation factor GTPase family. EIF2G subfamily. In terms of assembly, heterotrimer composed of an alpha, a beta and a gamma chain. The cofactor is Mg(2+).

It catalyses the reaction GTP + H2O = GDP + phosphate + H(+). EIF-2 functions in the early steps of protein synthesis by forming a ternary complex with GTP and initiator tRNA. This Haloarcula marismortui (strain ATCC 43049 / DSM 3752 / JCM 8966 / VKM B-1809) (Halobacterium marismortui) protein is Translation initiation factor 2 subunit gamma.